The primary structure comprises 1976 residues: Putative callose synthase 8 (1976 aa).

At 1 to 530 (MSHEIVPVDP…FWQIFRSFDR (530 aa)) the chain is on the cytoplasmic side. A helical membrane pass occupies residues 531–551 (MWSFFVLSLQALIIMACHDVG). Residues 552–565 (SPLQVFNANIFEDV) lie on the Extracellular side of the membrane. A helical transmembrane segment spans residues 566–586 (MSIFITSAILKLIKGILDIIF). The Cytoplasmic portion of the chain corresponds to 587-602 (KWKARNTMPINEKKKR). A helical membrane pass occupies residues 603–623 (LVKLGFAAMWTIILPVLYSHS). Residues 624 to 648 (RRKYICYFTNYKTWLGEWCFSPYMV) are Extracellular-facing. The chain crosses the membrane as a helical span at residues 649-669 (AVTIYLTGSAIELVLFFVPAI). Topologically, residues 670-707 (SKYIETSNHGIFKTLSWWGQPRLYVGRGMQETQVSQFK) are cytoplasmic. The chain crosses the membrane as a helical span at residues 708-728 (YTFFWILVLLTKFAFSYAFEI). Residues 729–759 (KPLIEPTRLIMKVGVRNYEWHEIFPEVKSNA) lie on the Extracellular side of the membrane. Residues 760–780 (AAIVAVWAPIMVVYFMDTQIW) traverse the membrane as a helical segment. The Cytoplasmic segment spans residues 781 to 1544 (YSVYCTIFGG…FDFFRMLSCY (764 aa)). The chain crosses the membrane as a helical span at residues 1545 to 1565 (FTTIGFYFSSLISVIGIYIYL). Residues 1566-1595 (YGQLYLVLSGLQKTLILEAKVKNIKSLETA) lie on the Extracellular side of the membrane. A helical membrane pass occupies residues 1596–1616 (LASQSFIQLGLLTGLPMVMEI). The Cytoplasmic portion of the chain corresponds to 1617–1620 (GLEK). Residues 1621–1641 (GFLIAFQDFILMQLQLAAFFF) traverse the membrane as a helical segment. The Extracellular segment spans residues 1642 to 1688 (TFSLGTKTHYFGRTILHGGAKYRPTGRKVVVFHANFSENYRLYSRSH). Asn1676 carries an N-linked (GlcNAc...) asparagine glycan. A helical membrane pass occupies residues 1689-1709 (FIKGFELMILLVVYELFKHTS). The Cytoplasmic segment spans residues 1710–1715 (QSNMAY). The helical transmembrane segment at 1716–1736 (SFITFSVWFMSFTWLCAPFLF) threads the bilayer. Over 1737–1790 (NPSGFTWEIIVGDWRDWNRWIKEQGGIGIQQDKSWQSWWNDEQAHLRGSGVGAR) the chain is Extracellular. Residues 1791–1811 (CLEIILSLRFFVYQYGLVYHL) traverse the membrane as a helical segment. At 1812–1819 (DITQSNTN) the chain is on the cytoplasmic side. A helical transmembrane segment spans residues 1820-1840 (IIVYALSWVVILATFFTVKAV). The Extracellular portion of the chain corresponds to 1841–1856 (DLGRQLFSTRKHLVFR). The helical transmembrane segment at 1857-1877 (FFKVFVFVSILTIIITLANIC) threads the bilayer. Residues 1878-1884 (HLSVKDL) lie on the Cytoplasmic side of the membrane. The chain crosses the membrane as a helical span at residues 1885-1905 (LVSCLAFLPTGWGLILIAQAV). Topologically, residues 1906–1928 (RPKIEGTSLWEFTQVLARAYDYG) are extracellular. A helical transmembrane segment spans residues 1929 to 1949 (MGVVLFAPMAILAWLPIISAF). Topologically, residues 1950 to 1976 (QTRFLFNEAFNRRLQIQPILAGKKKNR) are cytoplasmic.

It belongs to the glycosyltransferase 48 family.

It localises to the cell membrane. The catalysed reaction is [(1-&gt;3)-beta-D-glucosyl](n) + UDP-alpha-D-glucose = [(1-&gt;3)-beta-D-glucosyl](n+1) + UDP + H(+). In terms of biological role, involved in callose synthesis at the forming cell plate during cytokinesis. During plant growth and development, callose is found as a transitory component of the cell plate in dividing cells, is a major component of pollen mother cell walls and pollen tubes, and is found as a structural component of plasmodesmatal canals. This chain is Putative callose synthase 8 (CALS8), found in Arabidopsis thaliana (Mouse-ear cress).